The sequence spans 266 residues: HLA class II histocompatibility antigen, DR beta 3 chain (266 aa).

An N-terminal signal peptide occupies residues 1–29 (MVCLKLPGGSSLAALTVTLMVLSSRLAFA). Positions 30-124 (GDTRPRFLEL…GESFTVQRRV (95 aa)) are beta-1. The Extracellular segment spans residues 30-227 (GDTRPRFLEL…RARSESAQSK (198 aa)). Cystine bridges form between Cys-44–Cys-108 and Cys-146–Cys-202. Asn-48 is a glycosylation site (N-linked (GlcNAc...) asparagine). The interval 125–227 (HPQVTVYPAK…RARSESAQSK (103 aa)) is beta-2. In terms of domain architecture, Ig-like C1-type spans 126–214 (PQVTVYPAKT…EHPSVTSALT (89 aa)). Residues 228 to 248 (MLSGVGGFVLGLLFLGAGLFI) form a helical membrane-spanning segment. Over 249–266 (YFRNQKGHSGLQPTGFLS) the chain is Cytoplasmic.

The protein belongs to the MHC class II family. As to quaternary structure, heterotrimer that consists of an alpha chain HLA-DRA, a beta chain HLA-DRB1 and a peptide (peptide-MHCII). Newly synthesized alpha and beta chains forms a heterodimer (MHCII) that associates with the CD74/invariant chain (Ii) in the endoplasmic reticulum (ER). Ii is a trimer composed of three subunits and each subunit interacts with one MHCII dimer, blocking the peptide-binding cleft. As a result, MHCII molecules cannot bind peptides present in the ER. The complex of MHCII and CD74/Ii is transported in vesicles from ER to Golgi to lysosomes, where it encounters antigenic peptides generated via proteolysis of endocytosed antigens. MHCII dimers are dissociated from CD74/Ii by the combined action of proteolysis and HLA-DM. Lysosomal enzymes such as cathepsin, degrade CD74/Ii leaving a 24 amino acid remnant called class II-associated Ii or CLIP. Interacts (via the peptide binding cleft) with CLIP; this interaction inhibits antigen peptide binding before entry in the endosomal compartment. The displacement of CLIP and replacement by a high affinity peptide in lysosomes is performed by HLA-DM heterodimer. HLA-DM catalyzes CLIP dissociation from MHCII, stabilizes empty MHCII and mediates the selection of high affinity peptides. Interacts with HLA-DM heterodimer; this interaction is direct. Interacts with TCR (via CDR3). Interacts (via beta-2 domain) with CD4 coreceptor (via Ig-like V-type domain); this interaction is of exceptionally low affinity yet necessary for optimal recognition of antigenic peptides. Ubiquitinated by MARCHF1 and MARCHF8 at Lys-254 leading to sorting into the endosome system and down-regulation of MHC class II. In terms of tissue distribution, expressed in professional APCs: monocyte/macrophages, dendritic cells and B cells (at protein level).

The protein localises to the cell membrane. The protein resides in the endoplasmic reticulum membrane. It is found in the lysosome membrane. It localises to the late endosome membrane. Its subcellular location is the autolysosome membrane. Its function is as follows. A beta chain of antigen-presenting major histocompatibility complex class II (MHCII) molecule. In complex with the alpha chain HLA-DRA, displays antigenic peptides on professional antigen presenting cells (APCs) for recognition by alpha-beta T cell receptor (TCR) on HLA-DRB3-restricted CD4-positive T cells. This guides antigen-specific T-helper effector functions, both antibody-mediated immune response and macrophage activation, to ultimately eliminate the infectious agents and transformed cells. Typically presents extracellular peptide antigens of 10 to 30 amino acids that arise from proteolysis of endocytosed antigens in lysosomes. In the tumor microenvironment, presents antigenic peptides that are primarily generated in tumor-resident APCs likely via phagocytosis of apoptotic tumor cells or macropinocytosis of secreted tumor proteins. Presents peptides derived from intracellular proteins that are trapped in autolysosomes after macroautophagy, a mechanism especially relevant for T cell selection in the thymus and central immune tolerance. The selection of the immunodominant epitopes follows two processing modes: 'bind first, cut/trim later' for pathogen-derived antigenic peptides and 'cut first, bind later' for autoantigens/self-peptides. The anchor residue at position 1 of the peptide N-terminus, usually a large hydrophobic residue, is essential for high affinity interaction with MHCII molecules. In terms of biological role, ALLELE DRB3*01:01: Exclusively presents several immunogenic epitopes derived from C.tetani neurotoxin tetX, playing a significant role in immune recognition and long-term protection. Presents viral epitopes derived from HHV-6B U11, TRX2/U56 and U85 antigens to polyfunctional CD4-positive T cells with cytotoxic activity implicated in control of HHV-6B infection. ALLELE DRB3*02:02 Exclusively presents several immunogenic epitopes derived from C.tetani neurotoxin tetX, playing a significant role in immune recognition and long-term protection. Upon EBV infection, presents to CD4-positive T cells latent antigen EBNA2 (PRSPTVFYNIPPMPLPPSQL) and lytic antigen BZLF1 (LTAYHVSTAPTGSWF) peptides, driving oligoclonal expansion and selection of virus-specific memory T cell subsets with cytotoxic potential to directly eliminate virus-infected B cells. Presents viral epitopes derived from HHV-6B U11, gB/U39 and gH/U48 antigens to polyfunctional CD4-positive T cells with cytotoxic activity implicated in control of HHV-6B infection. Plays a minor role in CD4-positive T cell immune response against Dengue virus by presenting conserved peptides from capsid and non-structural NS3 proteins. Displays peptides derived from IAV matrix protein M, implying a role in protection against IAV infection. In the context of tumor immunesurveillance, may present to T-helper 1 cells an immunogenic epitope derived from tumor-associated antigen WT1 (KRYFKLSHLQMHSRKH), likely providing for effective antitumor immunity in a wide range of solid and hematological malignancies. Presents to Vbeta2-positive T-helper 1 cells specifically an immunodominant peptide derived from tumor antigen CTAG1A/NY-ESO-1(PGVLLKEFTVSGNILTIRLTAADHR) and confers protective memory response. In metastatic epithelial tumors, presents to intratumoral CD4-positive T cells a TP53 neoantigen (HYNYMCNSSCMGSMNRRPILTIITL) carrying G245S hotspot driver mutation and may mediate tumor regression. Functionally, ALLELE DRB3*03:01: Presents a series of conserved peptides derived from the M.tuberculosis PPE family of proteins, in particular PPE29 and PPE33, known to be highly immunogenic. Presents immunogenic epitopes derived from C.tetani neurotoxin tetX, playing a role in immune recognition and long-term protection. Displays immunodominant viral peptides from HCV non-structural protein NS2, as part of a broad range T-helper response to resolve infection. This Homo sapiens (Human) protein is HLA class II histocompatibility antigen, DR beta 3 chain (HLA-DRB3).